The primary structure comprises 261 residues: Cytochrome c oxidase subunit 3 (261 aa).

At 2–15 (THQTHAYHMVNPSP) the chain is on the mitochondrial matrix side. Residues 16–34 (WPLTGALSALLLTSGLVMW) traverse the membrane as a helical segment. Residues 35-40 (FHYNST) are Mitochondrial intermembrane-facing. Residues 41–66 (ILLSLGLLTNILTMYQWWRDIIREGT) form a helical membrane-spanning segment. The Mitochondrial matrix segment spans residues 67–72 (YQGHHT). Residues 73-105 (PIVQKGLRYGMILFIVSEVFFFAGFFWAFYHSS) traverse the membrane as a helical segment. At 106–128 (LVPTHDLGGCWPPTGITPLNPLE) the chain is on the mitochondrial intermembrane side. Residues 129–152 (VPLLNTSVLLASGVSITWAHHSLM) form a helical membrane-spanning segment. Topologically, residues 153-155 (EGN) are mitochondrial matrix. Residues 156-183 (RNHMNQALLITILLGLYFTILQASEYFE) form a helical membrane-spanning segment. Residues 184–190 (TSFSISD) are Mitochondrial intermembrane-facing. A helical transmembrane segment spans residues 191 to 223 (GIYGSTFFMATGFHGLHVIIGSTFLIVCLLRQL). The Mitochondrial matrix segment spans residues 224–232 (KFHFTSKHH). Residues 233–256 (FGFEAAAWYWHFVDVVWLFLYVSI) form a helical membrane-spanning segment. The Mitochondrial intermembrane portion of the chain corresponds to 257-261 (YWWGS).

Belongs to the cytochrome c oxidase subunit 3 family. Component of the cytochrome c oxidase (complex IV, CIV), a multisubunit enzyme composed of 14 subunits. The complex is composed of a catalytic core of 3 subunits MT-CO1, MT-CO2 and MT-CO3, encoded in the mitochondrial DNA, and 11 supernumerary subunits COX4I, COX5A, COX5B, COX6A, COX6B, COX6C, COX7A, COX7B, COX7C, COX8 and NDUFA4, which are encoded in the nuclear genome. The complex exists as a monomer or a dimer and forms supercomplexes (SCs) in the inner mitochondrial membrane with NADH-ubiquinone oxidoreductase (complex I, CI) and ubiquinol-cytochrome c oxidoreductase (cytochrome b-c1 complex, complex III, CIII), resulting in different assemblies (supercomplex SCI(1)III(2)IV(1) and megacomplex MCI(2)III(2)IV(2)).

It localises to the mitochondrion inner membrane. The catalysed reaction is 4 Fe(II)-[cytochrome c] + O2 + 8 H(+)(in) = 4 Fe(III)-[cytochrome c] + 2 H2O + 4 H(+)(out). In terms of biological role, component of the cytochrome c oxidase, the last enzyme in the mitochondrial electron transport chain which drives oxidative phosphorylation. The respiratory chain contains 3 multisubunit complexes succinate dehydrogenase (complex II, CII), ubiquinol-cytochrome c oxidoreductase (cytochrome b-c1 complex, complex III, CIII) and cytochrome c oxidase (complex IV, CIV), that cooperate to transfer electrons derived from NADH and succinate to molecular oxygen, creating an electrochemical gradient over the inner membrane that drives transmembrane transport and the ATP synthase. Cytochrome c oxidase is the component of the respiratory chain that catalyzes the reduction of oxygen to water. Electrons originating from reduced cytochrome c in the intermembrane space (IMS) are transferred via the dinuclear copper A center (CU(A)) of subunit 2 and heme A of subunit 1 to the active site in subunit 1, a binuclear center (BNC) formed by heme A3 and copper B (CU(B)). The BNC reduces molecular oxygen to 2 water molecules using 4 electrons from cytochrome c in the IMS and 4 protons from the mitochondrial matrix. This chain is Cytochrome c oxidase subunit 3, found in Rattus norvegicus (Rat).